The sequence spans 357 residues: Isopentenyl-diphosphate delta-isomerase (357 aa).

12–13 contacts substrate; sequence RK. FMN is bound by residues S70, 71 to 73, S101, and N130; that span reads SMT. Residue 101-103 coordinates substrate; that stretch reads SMR. Q165 is a substrate binding site. E166 provides a ligand contact to Mg(2+). FMN is bound by residues K197 and 310-311; that span reads AR.

This sequence belongs to the IPP isomerase type 2 family. Homooctamer. Dimer of tetramers. It depends on FMN as a cofactor. NADPH serves as cofactor. Requires Mg(2+) as cofactor.

It localises to the cytoplasm. It carries out the reaction isopentenyl diphosphate = dimethylallyl diphosphate. Functionally, involved in the biosynthesis of isoprenoids. Catalyzes the 1,3-allylic rearrangement of the homoallylic substrate isopentenyl (IPP) to its allylic isomer, dimethylallyl diphosphate (DMAPP). The protein is Isopentenyl-diphosphate delta-isomerase of Pelodictyon phaeoclathratiforme (strain DSM 5477 / BU-1).